A 230-amino-acid chain; its full sequence is Sugar fermentation stimulation protein homolog (230 aa).

It belongs to the SfsA family.

The chain is Sugar fermentation stimulation protein homolog from Caldivirga maquilingensis (strain ATCC 700844 / DSM 13496 / JCM 10307 / IC-167).